The sequence spans 175 residues: uncharacterized protein (175 aa).

The first 22 residues, 1 to 22 (MNRIVGILISILMLACIGVTMA), serve as a signal peptide directing secretion.

This is an uncharacterized protein from Archaeoglobus fulgidus (strain ATCC 49558 / DSM 4304 / JCM 9628 / NBRC 100126 / VC-16).